The chain runs to 93 residues: MSNGTPSVRVLYFASARTTIGHSSETISLPTTPFPLASLITLIANKYSSRGAEAVLRTCRWSVDNTLIEIDELIEWTLHGREEVAAIPPVSGG.

Residue G93 is modified to 1-thioglycine; alternate. A Glycyl adenylate; alternate modification is found at G93.

This sequence belongs to the MoaD family. MOCS2A subfamily. Heterotetramer; composed of 2 small (MOCS2A) and 2 large (MOCS2B) subunits. Post-translationally, C-terminal thiocarboxylation occurs in 2 steps, it is first acyl-adenylated (-COAMP) via the hesA/moeB/thiF part of UBA4, then thiocarboxylated (-COSH) via the rhodanese domain of UBA4.

It localises to the cytoplasm. It participates in cofactor biosynthesis; molybdopterin biosynthesis. Functionally, acts as a sulfur carrier required for molybdopterin biosynthesis. Component of the molybdopterin synthase complex that catalyzes the conversion of precursor Z into molybdopterin by mediating the incorporation of 2 sulfur atoms into precursor Z to generate a dithiolene group. In the complex, serves as sulfur donor by being thiocarboxylated (-COSH) at its C-terminus by UBA4. After interaction with MOCS2B, the sulfur is then transferred to precursor Z to form molybdopterin. This chain is Molybdopterin synthase sulfur carrier subunit, found in Mycosarcoma maydis (Corn smut fungus).